The sequence spans 1932 residues: DOCK-like protein 1 (1932 aa).

Positions 1410 to 1824 (LLEANRPELF…EIERYSRTLS (415 aa)) constitute a DOCKER domain. Residues 1908–1921 (STFLAGSQPNTNTD) are compositionally biased toward polar residues. The segment at 1908–1932 (STFLAGSQPNTNTDSQHKHDYSHSG) is disordered. A compositionally biased stretch (basic and acidic residues) spans 1922 to 1932 (SQHKHDYSHSG).

The protein belongs to the DOCK family. In terms of assembly, forms an active heterodimer with LMO1.

The protein resides in the cytoplasm. The protein localises to the mitochondrion. Functionally, forms a transiant heterodimeric complex with LMO1, that acts as a guanine nucleotide exchange factor exchange factor (GEF) for the small GTPase RHO5. DCK1, LMO1 and RHO5 relocate to mitochondria upon oxidative stress and trigger cell death. The DCK1/LMO1/RHO5 signaling module mediates mitochondrial turnover under nitrogen starvation conditions via mitophagy. The DCK1/LMO1/RHO5 signaling module plays also a function in cell wall integrity signaling. This chain is DOCK-like protein 1, found in Saccharomyces cerevisiae (strain ATCC 204508 / S288c) (Baker's yeast).